Consider the following 92-residue polypeptide: Putative lambdoid prophage defective integrase (92 aa).

It belongs to the 'phage' integrase family.

This Escherichia coli O157:H7 protein is Putative lambdoid prophage defective integrase (intG).